The sequence spans 284 residues: Tropomyosin Per a 7.0102 (284 aa).

Residues 1-266 (MDAIKKKMQA…EDELVHEKEK (266 aa)) adopt a coiled-coil conformation.

Belongs to the tropomyosin family. Homodimer. As to expression, expressed in striated skeletal muscle (at protein level).

Tropomyosin, in association with the troponin complex, plays a central role in the calcium dependent regulation of muscle contraction. The chain is Tropomyosin Per a 7.0102 from Periplaneta americana (American cockroach).